The chain runs to 926 residues: DNA topoisomerase 3-alpha (926 aa).

The 145-residue stretch at 10–154 (TVLNVAEKPS…NLFIRRAHFS (145 aa)) folds into the Toprim domain. Residues E16, D123, and D125 each contribute to the Mg(2+) site. One can recognise a Topo IA-type catalytic domain in the interval 172–604 (NQLFAEAVDA…CLQQMKACFL (433 aa)). Residues 219 to 224 (SYGPCQ) are interaction with DNA. Y342 serves as the catalytic O-(5'-phospho-DNA)-tyrosine intermediate. The C4-type zinc-finger motif lies at 642 to 670 (CNLCNESDMALRKNRDGNFMVGCMNYPQC). Disordered stretches follow at residues 740–760 (SRSQARRTPGTAPSNNIQGSN) and 775–806 (HASTNCPSRVPASRNSRPTATNPRNDESTVSC). The segment covering 750 to 760 (TAPSNNIQGSN) has biased composition (polar residues). The segment at 767–782 (CIHCQQRGHASTNCPS) adopts a CCHC-type 1 zinc-finger fold. C806, C809, C831, and C836 together coordinate Zn(2+). The GRF-type zinc finger occupies 806–845 (CNTCGSQCVLRTANTEANRGRQFFSCPTQGCSFFAWEDSI). The interval 849-890 (SGNATTGSNSGGSGRRGSRGRGRGGRGGQSSGGRRGSGTSFV) is disordered. A compositionally biased stretch (gly residues) spans 873–884 (GRGGQSSGGRRG). Residues 901–917 (RCFSCGDPSHFANACPN) form a CCHC-type 2 zinc finger.

Belongs to the type IA topoisomerase family. Component of the RMI complex, containing at least TOP3A and RMI1. The RMI complex interacts with RECQL4A. The cofactor is Mg(2+).

The catalysed reaction is ATP-independent breakage of single-stranded DNA, followed by passage and rejoining.. Its function is as follows. Releases the supercoiling and torsional tension of DNA introduced during the DNA replication and transcription by transiently cleaving and rejoining one strand of the DNA duplex. Introduces a single-strand break via transesterification at a target site in duplex DNA. The scissile phosphodiester is attacked by the catalytic tyrosine of the enzyme, resulting in the formation of a DNA-(5'-phosphotyrosyl)-enzyme intermediate and the expulsion of a 3'-OH DNA strand. The free DNA strand then undergoes passage around the unbroken strand thus removing DNA supercoils. Finally, in the religation step, the DNA 3'-OH attacks the covalent intermediate to expel the active-site tyrosine and restore the DNA phosphodiester backbone. Essential component of the RMI complex, a complex that plays an important role in the resolution step of homologous recombination, in a process called Holliday Junction dissolution, to limit DNA crossover formation in cells. Together with RMI1, is essential for the resolution of meiotic recombination intermediates, a step that prevents entanglement of the parental chromosomes. May have DNA decatenation activity. The sequence is that of DNA topoisomerase 3-alpha (TOP3A) from Arabidopsis thaliana (Mouse-ear cress).